The sequence spans 262 residues: MQYKTKAKKSLGQNFLQDENIIRKIVQLANIKKHDIVVEIGPGLGALTRYLLSSSNNVSVVEFDASVIDTLIANCQKYGTPHIYNQDFLKFDISSLENSSNQKIKLIGNLPYNISSPILFKVIKDSDKIVDAHFMLQKEVVERIVSLPNSKSYGRLSVILQYHFDCSMILKIPPEVFYPQPKVDSAILRLKPKNSKELLKNYNFFEEIVKQSFAQRRKTLHNNLKSILKERKIDPSTLPVDTNLRAENLSVGDFVSLANFLS.

6 residues coordinate S-adenosyl-L-methionine: N14, L16, G41, E62, D87, and N109.

The protein belongs to the class I-like SAM-binding methyltransferase superfamily. rRNA adenine N(6)-methyltransferase family. RsmA subfamily.

It is found in the cytoplasm. It catalyses the reaction adenosine(1518)/adenosine(1519) in 16S rRNA + 4 S-adenosyl-L-methionine = N(6)-dimethyladenosine(1518)/N(6)-dimethyladenosine(1519) in 16S rRNA + 4 S-adenosyl-L-homocysteine + 4 H(+). Functionally, specifically dimethylates two adjacent adenosines (A1518 and A1519) in the loop of a conserved hairpin near the 3'-end of 16S rRNA in the 30S particle. May play a critical role in biogenesis of 30S subunits. The protein is Ribosomal RNA small subunit methyltransferase A of Francisella tularensis subsp. holarctica (strain FTNF002-00 / FTA).